A 293-amino-acid chain; its full sequence is 4-hydroxy-tetrahydrodipicolinate synthase (293 aa).

Pyruvate is bound at residue Thr47. Tyr135 functions as the Proton donor/acceptor in the catalytic mechanism. Lys163 (schiff-base intermediate with substrate) is an active-site residue. Ile204 is a binding site for pyruvate.

The protein belongs to the DapA family. As to quaternary structure, homotetramer; dimer of dimers.

It is found in the cytoplasm. It catalyses the reaction L-aspartate 4-semialdehyde + pyruvate = (2S,4S)-4-hydroxy-2,3,4,5-tetrahydrodipicolinate + H2O + H(+). The protein operates within amino-acid biosynthesis; L-lysine biosynthesis via DAP pathway; (S)-tetrahydrodipicolinate from L-aspartate: step 3/4. Its function is as follows. Catalyzes the condensation of (S)-aspartate-beta-semialdehyde [(S)-ASA] and pyruvate to 4-hydroxy-tetrahydrodipicolinate (HTPA). This is 4-hydroxy-tetrahydrodipicolinate synthase from Brachyspira hyodysenteriae (strain ATCC 49526 / WA1).